Consider the following 258-residue polypeptide: Steroid 5-alpha-reductase DET2 (258 aa).

A run of 6 helical transmembrane segments spans residues 8–28, 49–69, 77–97, 109–129, 144–164, and 201–221; these read FHYC…SLYF, LAWF…FPSG, SFLL…LYPL, FPVS…YLQA, LFWW…WVNV, and IMEW…GFFL.

This sequence belongs to the steroid 5-alpha reductase family. As to expression, accumulates in fibers (seed trichomes) during both their initiation and elongation phases. Also present in roots, hypocotyls, leaves, flowers and ovules, and barely in cotyledons.

The protein resides in the membrane. It catalyses the reaction a 3-oxo-5alpha-steroid + NADP(+) = a 3-oxo-Delta(4)-steroid + NADPH + H(+). Its pathway is plant hormone biosynthesis; brassinosteroid biosynthesis. Involved in a reduction step in the biosynthesis of the plant steroid, brassinolide (BL). Promotes cotton fibers (seed trichomes) initiation and elongation. The chain is Steroid 5-alpha-reductase DET2 from Gossypium hirsutum (Upland cotton).